Reading from the N-terminus, the 39-residue chain is Protein MchX (39 aa).

A helical transmembrane segment spans residues 15-37; that stretch reads SALSSTLLLSLIMSATLLEYSLS.

It is found in the cell inner membrane. Its function is as follows. Required for microcin H47 production. Possibly involved in a regulatory loop modulating its own expression and that of MchI and MchB. This chain is Protein MchX (mchX), found in Escherichia coli.